The chain runs to 345 residues: Cuticle collagen 14 (345 aa).

Triple-helical region stretches follow at residues 156–185 (GPPG…PGPP), 207–263 (GDGG…PGTY), and 268–333 (GPAG…PGSC). Positions 161 to 345 (AGDGGRDGAD…CPPARLAPGY (185 aa)) are disordered. Pro residues-rich tracts occupy residues 179 to 191 (IGPP…PGPD), 198 to 223 (PQCP…PPGA), and 278 to 290 (RPGP…PAGP). Positions 292–304 (GENGKGGGQGPSG) are enriched in gly residues.

The protein belongs to the cuticular collagen family. As to quaternary structure, collagen polypeptide chains are complexed within the cuticle by disulfide bonds and other types of covalent cross-links.

Functionally, nematode cuticles are composed largely of collagen-like proteins. The cuticle functions both as an exoskeleton and as a barrier to protect the worm from its environment. This Caenorhabditis elegans protein is Cuticle collagen 14 (col-14).